We begin with the raw amino-acid sequence, 423 residues long: Pre-mRNA polyadenylation factor fip-1 (423 aa).

Acidic residues predominate over residues 1–11; that stretch reads MDIDEDEDFYA. 3 disordered regions span residues 1-178, 278-307, and 360-423; these read MDID…PVRT, GPGGPGVGPAGPGAMGPGGPAGAGGMGGPG, and PGGG…GRRW. A compositionally biased stretch (low complexity) spans 19 to 61; sequence PPTTAATTTTPATTTTTAAPTTTTTTTSTTTASAPPTTTSSST. A compositionally biased stretch (acidic residues) spans 65-90; sequence DELEEGEEEDEGGGAMDEDDDSDIDI. Over residues 135-146 the composition is skewed to low complexity; the sequence is GTNSNSNSSSNK. Residues 360-415 show a composition bias toward gly residues; that stretch reads PGGGPGGPGTGGMGPGGPGGQGGQGQQFGGGFGGNQGQGGYGGYDQMGGAGGGGRG.

It belongs to the FIP1 family.

The protein resides in the nucleus. In terms of biological role, pre-mRNA polyadenylation factor that directly interacts with poly(A) polymerase. This is Pre-mRNA polyadenylation factor fip-1 (fip-1) from Neurospora crassa (strain ATCC 24698 / 74-OR23-1A / CBS 708.71 / DSM 1257 / FGSC 987).